Here is a 530-residue protein sequence, read N- to C-terminus: MLLSSAFVGSCLAILNFAAAVSAQGGLSRTTLNIVNKVISPDGYSRDSVLANGIHPGPLISGNKGDTFQINVNNQLHDNSMNTSTTVHWHGIDQHHTNWADGPAFVTQCPIVPEHSFLYNFTVPDQAGTFWYHSHESVQYCDGLRGPLVVYDPEDPHKDLYDVDDDTTIISLSDWYHSPAHELLPGPIPPNSTLINSLGRPDGSDLPVTIIEVDPTKRYRFRLISMACHPYFDFSIDGHNMTIIEADGSNTEPLSDIDQIRIYPAQRYSFVLEPNQTPGDYWIRAAPLQLGNTSNPDTTTSLGLAILRYTNRSGYAQAASVDPYDISQTPIPVNPLLEQNLHAYGDVPELDEECDDCKLTFDFAFNFTAVDFTVNGTSYVNPTVPVLLQILNGTYTAQELLPHHSVYTLPRNKTIEITMPGAVTGGPHPMHLHGHSFYVIQSMGSDTTNTVNPVLRDTVAVGGATGDNVVIRFRTDNPGPWIMHCHIDFHLALGFAVVLAEAPQDVAEYVSPIPTWDELCPIWDNAPSHN.

An N-terminal signal peptide occupies residues 1–23 (MLLSSAFVGSCLAILNFAAAVSA). Plastocyanin-like domains are found at residues 36–154 (NKVI…YDPE) and 167–311 (TTII…RYTN). N82 carries N-linked (GlcNAc...) asparagine glycosylation. 2 residues coordinate Cu cation: H88 and H90. 2 cysteine pairs are disulfide-bonded: C109-C520 and C141-C228. Residue N120 is glycosylated (N-linked (GlcNAc...) asparagine). The Cu cation site is built by H133 and H135. 8 N-linked (GlcNAc...) asparagine glycosylation sites follow: N191, N240, N292, N311, N366, N375, N392, and N412. Positions 379–504 (YVNPTVPVLL…FAVVLAEAPQ (126 aa)) constitute a Plastocyanin-like 3 domain. H428, H431, H433, H484, C485, H486, and H490 together coordinate Cu cation.

This sequence belongs to the multicopper oxidase family. It depends on Cu cation as a cofactor.

Its subcellular location is the secreted. The enzyme catalyses 4 hydroquinone + O2 = 4 benzosemiquinone + 2 H2O. With respect to regulation, inhibited by chloride ions. Inhibited by citrate. Inhibited by oxalate. Activated by acetate. In terms of biological role, in vitro, has activity towards 2,2'-azino-bis(3-ethylbenzthiazoline-6-sulfonic acid) (ABTS), 2,6-dimethoxy-phenol, and guaiacol. Although brown rot fungi preferentially degrade hemicellulose and cellulose, the enzyme may contribute to generating small amounts of lignin breakdown products required for catalytic reactions. The sequence is that of Laccase-2 from Fomitopsis schrenkii (Brown rot fungus).